A 398-amino-acid chain; its full sequence is Nucleotide-sugar uncharacterized transporter 2 (398 aa).

A run of 10 helical transmembrane segments spans residues 54-74 (FCGP…IILA), 84-104 (FNFP…LLAF), 119-139 (TTPF…SGLA), 150-170 (FYQM…FVLF), 179-199 (VMAL…DLEF), 201-221 (LFGA…KILW), 242-262 (FTVF…VLLF), 271-291 (AILI…LALG), 299-319 (VVLG…IFGS), and 322-342 (GFIS…YTWL).

Belongs to the TPT transporter family. TPT (TC 2.A.7.9) subfamily.

The protein localises to the membrane. The protein is Nucleotide-sugar uncharacterized transporter 2 of Arabidopsis thaliana (Mouse-ear cress).